Consider the following 415-residue polypeptide: Interleukin-5 receptor subunit alpha (415 aa).

The signal sequence occupies residues 1–17 (MVPVLLILVGALATLQA). The Extracellular portion of the chain corresponds to 18-339 (DLLNHKKFLL…KERKSLVEWH (322 aa)). The 92-residue stretch at 29-120 (PPVNFTIKAT…VSAELKAPPG (92 aa)) folds into the Fibronectin type-III 1 domain. N-linked (GlcNAc...) asparagine glycosylation is found at Asn32 and Asn128. Intrachain disulfides connect Cys131–Cys152 and Cys179–Cys193. N-linked (GlcNAc...) asparagine glycosylation is found at Asn213 and Asn241. A Fibronectin type-III 2 domain is found at 238 to 331 (PPRNVTVEIE…WSQPIYVGKE (94 aa)). Cys266 and Cys313 form a disulfide bridge. A WSXWS motif motif is present at residues 319–323 (WGEWS). A helical membrane pass occupies residues 340–361 (LIVLPTAACFVLLIFSLICRVC). At 362–415 (HLWTRLFPPVPAPKSNIKDLPVVTEYEKPSNETKIEVVHCVEEVGFEVMGNSTF) the chain is on the cytoplasmic side. The short motif at 367 to 375 (LFPPVPAPK) is the Box 1 motif element.

Interacts with IL5. Interacts with CSF2RB. Interacts with JAK2. Interacts with SDCBP. Expressed on eosinophils and basophils. Also on B-cells.

It localises to the membrane. Functionally, cell surface receptor that plays an important role in the survival, differentiation, and chemotaxis of eosinophils. Acts by forming a heterodimeric receptor with CSF2RB subunit and subsequently binding to interleukin-5. In unstimulated conditions, interacts constitutively with JAK2. Heterodimeric receptor activation leads to JAK2 stimulation and subsequent activation of the JAK-STAT pathway. The protein is Interleukin-5 receptor subunit alpha (Il5ra) of Mus musculus (Mouse).